The chain runs to 63 residues: Cecropin-1 (63 aa).

The signal sequence occupies residues 1–21 (MNFNKVFILVAIVIAIFAGQT). Residues 22 to 23 (EA) constitute a propeptide that is removed on maturation. Arg-62 carries the post-translational modification Arginine amide.

It belongs to the cecropin family.

It localises to the secreted. Cecropins have lytic and antibacterial activity against several Gram-positive and Gram-negative bacteria. The chain is Cecropin-1 (CEC1) from Ceratitis capitata (Mediterranean fruit fly).